We begin with the raw amino-acid sequence, 103 residues long: Small ribosomal subunit protein uS10 (103 aa).

This sequence belongs to the universal ribosomal protein uS10 family. In terms of assembly, part of the 30S ribosomal subunit.

Involved in the binding of tRNA to the ribosomes. This Vibrio cholerae serotype O1 (strain ATCC 39541 / Classical Ogawa 395 / O395) protein is Small ribosomal subunit protein uS10.